Consider the following 445-residue polypeptide: tRNA(Ile)-lysidine synthase (445 aa).

33–38 (SGGLDS) is an ATP binding site.

This sequence belongs to the tRNA(Ile)-lysidine synthase family.

The protein localises to the cytoplasm. It catalyses the reaction cytidine(34) in tRNA(Ile2) + L-lysine + ATP = lysidine(34) in tRNA(Ile2) + AMP + diphosphate + H(+). In terms of biological role, ligates lysine onto the cytidine present at position 34 of the AUA codon-specific tRNA(Ile) that contains the anticodon CAU, in an ATP-dependent manner. Cytidine is converted to lysidine, thus changing the amino acid specificity of the tRNA from methionine to isoleucine. This Pseudomonas syringae pv. tomato (strain ATCC BAA-871 / DC3000) protein is tRNA(Ile)-lysidine synthase.